A 152-amino-acid chain; its full sequence is Superoxide dismutase [Cu-Zn] (152 aa).

3 residues coordinate Cu cation: histidine 45, histidine 47, and histidine 62. Cysteine 56 and cysteine 145 are joined by a disulfide. Zn(2+)-binding residues include histidine 62, histidine 70, histidine 79, and aspartate 82. Histidine 119 contributes to the Cu cation binding site.

The protein belongs to the Cu-Zn superoxide dismutase family. As to quaternary structure, homodimer. Cu cation is required as a cofactor. The cofactor is Zn(2+).

It is found in the cytoplasm. The enzyme catalyses 2 superoxide + 2 H(+) = H2O2 + O2. Functionally, destroys radicals which are normally produced within the cells and which are toxic to biological systems. The polypeptide is Superoxide dismutase [Cu-Zn] (SODCC) (Spinacia oleracea (Spinach)).